We begin with the raw amino-acid sequence, 504 residues long: Probable alpha-L-arabinofuranosidase C (504 aa).

Asn152, Asn181, Asn269, and Asn467 each carry an N-linked (GlcNAc...) asparagine glycan.

Belongs to the glycosyl hydrolase 51 family.

It localises to the secreted. The enzyme catalyses Hydrolysis of terminal non-reducing alpha-L-arabinofuranoside residues in alpha-L-arabinosides.. The protein operates within glycan metabolism; L-arabinan degradation. Alpha-L-arabinofuranosidase involved in the degradation of arabinoxylan, a major component of plant hemicellulose. Acts only on small linear 1,5-alpha-linked L-arabinofuranosyl oligosaccharides. This chain is Probable alpha-L-arabinofuranosidase C (abfC), found in Aspergillus terreus (strain NIH 2624 / FGSC A1156).